The chain runs to 138 residues: Small ribosomal subunit protein uS11c (138 aa).

It belongs to the universal ribosomal protein uS11 family. Part of the 30S ribosomal subunit.

It localises to the plastid. It is found in the chloroplast. The polypeptide is Small ribosomal subunit protein uS11c (Illicium oligandrum (Star anise)).